The sequence spans 60 residues: Large ribosomal subunit protein uL30 (60 aa).

The protein belongs to the universal ribosomal protein uL30 family. In terms of assembly, part of the 50S ribosomal subunit.

This is Large ribosomal subunit protein uL30 from Acidothermus cellulolyticus (strain ATCC 43068 / DSM 8971 / 11B).